The sequence spans 181 residues: Large ribosomal subunit protein uL5 (181 aa).

It belongs to the universal ribosomal protein uL5 family. As to quaternary structure, part of the 50S ribosomal subunit; part of the 5S rRNA/L5/L18/L25 subcomplex. Contacts the 5S rRNA and the P site tRNA. Forms a bridge to the 30S subunit in the 70S ribosome.

In terms of biological role, this is one of the proteins that bind and probably mediate the attachment of the 5S RNA into the large ribosomal subunit, where it forms part of the central protuberance. In the 70S ribosome it contacts protein S13 of the 30S subunit (bridge B1b), connecting the 2 subunits; this bridge is implicated in subunit movement. Contacts the P site tRNA; the 5S rRNA and some of its associated proteins might help stabilize positioning of ribosome-bound tRNAs. The sequence is that of Large ribosomal subunit protein uL5 from Picosynechococcus sp. (strain ATCC 27264 / PCC 7002 / PR-6) (Agmenellum quadruplicatum).